Consider the following 266-residue polypeptide: Protein phosphatase 1 regulatory subunit 35 (266 aa).

Residues 1–10 (MMVYNGSQLE) are compositionally biased toward polar residues. A disordered region spans residues 1 to 118 (MMVYNGSQLE…QDLGTPVQQS (118 aa)). Positions 21-38 (PGPPPEPRAPEPGAPVPE) are enriched in pro residues. 2 positions are modified to phosphoserine: serine 46 and serine 51. Residues 62-79 (GRRKGRADRRGGARKGRQ) are compositionally biased toward basic residues. Over residues 86 to 97 (PPSPVRSGPPPA) the composition is skewed to pro residues.

This sequence belongs to the PPP1R35 family. Interacts with PPP1CA; this interaction mediates the PPP1CA phosphatase activity inhibition. Interacts with RTTN; this interaction allows the mutual recruitment to the centriole.

It is found in the cytoplasm. The protein resides in the cytoskeleton. The protein localises to the microtubule organizing center. It localises to the centrosome. Its subcellular location is the centriole. In terms of biological role, during centriole duplication, plays a role in the centriole elongation by promoting the recruitment of the microtubule-binding elongation machinery through its interaction with RTTN, leading to the centriole to centrosome conversion. In addition may play a role in the primary cilia assembly. This chain is Protein phosphatase 1 regulatory subunit 35, found in Bos taurus (Bovine).